The sequence spans 237 residues: Ribonuclease PH (237 aa).

Residues Arg-86 and 124–126 contribute to the phosphate site; that span reads GTR.

It belongs to the RNase PH family. Homohexameric ring arranged as a trimer of dimers.

The enzyme catalyses tRNA(n+1) + phosphate = tRNA(n) + a ribonucleoside 5'-diphosphate. Phosphorolytic 3'-5' exoribonuclease that plays an important role in tRNA 3'-end maturation. Removes nucleotide residues following the 3'-CCA terminus of tRNAs; can also add nucleotides to the ends of RNA molecules by using nucleoside diphosphates as substrates, but this may not be physiologically important. Probably plays a role in initiation of 16S rRNA degradation (leading to ribosome degradation) during starvation. This chain is Ribonuclease PH, found in Shewanella loihica (strain ATCC BAA-1088 / PV-4).